Here is a 180-residue protein sequence, read N- to C-terminus: Large ribosomal subunit protein uL5 (180 aa).

Belongs to the universal ribosomal protein uL5 family. As to quaternary structure, part of the 50S ribosomal subunit; part of the 5S rRNA/L5/L18/L25 subcomplex. Contacts the 5S rRNA and the P site tRNA. Forms a bridge to the 30S subunit in the 70S ribosome.

Functionally, this is one of the proteins that bind and probably mediate the attachment of the 5S RNA into the large ribosomal subunit, where it forms part of the central protuberance. In the 70S ribosome it contacts protein S13 of the 30S subunit (bridge B1b), connecting the 2 subunits; this bridge is implicated in subunit movement. Contacts the P site tRNA; the 5S rRNA and some of its associated proteins might help stabilize positioning of ribosome-bound tRNAs. In Pediococcus pentosaceus (strain ATCC 25745 / CCUG 21536 / LMG 10740 / 183-1w), this protein is Large ribosomal subunit protein uL5.